Reading from the N-terminus, the 252-residue chain is Phosphate import ATP-binding protein PstB (252 aa).

The ABC transporter domain occupies 6-247 (MSIRDLNFYY…PAQKATEDYI (242 aa)). Position 38-45 (38-45 (GPSGCGKS)) interacts with ATP.

It belongs to the ABC transporter superfamily. Phosphate importer (TC 3.A.1.7) family. In terms of assembly, the complex is composed of two ATP-binding proteins (PstB), two transmembrane proteins (PstC and PstA) and a solute-binding protein (PstS).

The protein localises to the cell inner membrane. It carries out the reaction phosphate(out) + ATP + H2O = ADP + 2 phosphate(in) + H(+). In terms of biological role, part of the ABC transporter complex PstSACB involved in phosphate import. Responsible for energy coupling to the transport system. In Psychrobacter cryohalolentis (strain ATCC BAA-1226 / DSM 17306 / VKM B-2378 / K5), this protein is Phosphate import ATP-binding protein PstB.